Here is a 487-residue protein sequence, read N- to C-terminus: NADH-quinone oxidoreductase subunit N (487 aa).

Transmembrane regions (helical) follow at residues 9–29, 38–58, 73–93, 108–128, 161–181, 208–228, 240–260, 277–297, 306–326, 328–348, 374–394, 408–430, and 452–472; these read PVLPEIFMAVAGLALLMLGVF, VSVLVILALGAAMVLVSSLGG, FAGFAKGLVLVASAIATAMSL, VLVLFATLGMMMMISANDFIA, FVLGSLASGLLLYGISLLYGF, IIAGLVFVLAGLSFKVSAVPF, PTPVTSFFAVAPKIAALCLLV, VVTFIAIGSMFVGSFAAVVQT, SSIGHVGFVLVGIAAGSTLGI, GVLIYLAIYLFMNVGAFAVIL, AFVMAVLMFSMAGVPPLAGFW, LYTLSILGVLSSVVSTYYYLRIV, and LVMAVSTIVILAFTLIPAPLV.

The protein belongs to the complex I subunit 2 family. As to quaternary structure, NDH-1 is composed of 14 different subunits. Subunits NuoA, H, J, K, L, M, N constitute the membrane sector of the complex.

It is found in the cell inner membrane. The catalysed reaction is a quinone + NADH + 5 H(+)(in) = a quinol + NAD(+) + 4 H(+)(out). In terms of biological role, NDH-1 shuttles electrons from NADH, via FMN and iron-sulfur (Fe-S) centers, to quinones in the respiratory chain. The immediate electron acceptor for the enzyme in this species is believed to be ubiquinone. Couples the redox reaction to proton translocation (for every two electrons transferred, four hydrogen ions are translocated across the cytoplasmic membrane), and thus conserves the redox energy in a proton gradient. This chain is NADH-quinone oxidoreductase subunit N, found in Paramagnetospirillum magneticum (strain ATCC 700264 / AMB-1) (Magnetospirillum magneticum).